The sequence spans 460 residues: tRNA (guanine(37)-N(1))-methyltransferase (460 aa).

S-adenosyl-L-methionine is bound by residues His204, 243–244, 271–272, and Asn292; these read DL and DA. A compositionally biased stretch (low complexity) spans 390 to 428; the sequence is ASTTTTPTTSNTNTSTTTSTTSTSTTTTESTNTNNSANN. The segment at 390 to 460 is disordered; that stretch reads ASTTTTPTTS…SIDTNKKLKN (71 aa). Positions 442–451 are enriched in acidic residues; sequence DSNETNETDS.

Belongs to the class I-like SAM-binding methyltransferase superfamily. TRM5/TYW2 family. As to quaternary structure, monomer.

It localises to the mitochondrion matrix. It is found in the nucleus. The protein localises to the cytoplasm. The enzyme catalyses guanosine(37) in tRNA + S-adenosyl-L-methionine = N(1)-methylguanosine(37) in tRNA + S-adenosyl-L-homocysteine + H(+). Its function is as follows. Specifically methylates the N1 position of guanosine-37 in various cytoplasmic and mitochondrial tRNAs. Methylation is not dependent on the nature of the nucleoside 5' of the target nucleoside. This is the first step in the biosynthesis of wybutosine (yW), a modified base adjacent to the anticodon of tRNAs and required for accurate decoding. This chain is tRNA (guanine(37)-N(1))-methyltransferase (trmt5), found in Dictyostelium discoideum (Social amoeba).